Reading from the N-terminus, the 678-residue chain is DNA ligase (678 aa).

NAD(+)-binding positions include 47–51, 96–97, and E122; these read DSDYD and SL. K124 (N6-AMP-lysine intermediate) is an active-site residue. NAD(+)-binding residues include R145, E182, K300, and K324. Positions 418, 421, 436, and 442 each coordinate Zn(2+). The BRCT domain maps to 602 to 678; that stretch reads AYNESFTGKT…ILEDNLKDLL (77 aa).

It belongs to the NAD-dependent DNA ligase family. LigA subfamily. Mg(2+) is required as a cofactor. The cofactor is Mn(2+).

The enzyme catalyses NAD(+) + (deoxyribonucleotide)n-3'-hydroxyl + 5'-phospho-(deoxyribonucleotide)m = (deoxyribonucleotide)n+m + AMP + beta-nicotinamide D-nucleotide.. DNA ligase that catalyzes the formation of phosphodiester linkages between 5'-phosphoryl and 3'-hydroxyl groups in double-stranded DNA using NAD as a coenzyme and as the energy source for the reaction. It is essential for DNA replication and repair of damaged DNA. This is DNA ligase from Francisella tularensis subsp. novicida (strain U112).